The sequence spans 493 residues: GTPase Der (493 aa).

EngA-type G domains follow at residues P3 to L166 and I206 to T379. GTP contacts are provided by residues G9 to S16, D56 to I60, N118 to D121, G212 to S219, D259 to V263, and N324 to D327. The region spanning T380–E464 is the KH-like domain.

Belongs to the TRAFAC class TrmE-Era-EngA-EngB-Septin-like GTPase superfamily. EngA (Der) GTPase family. In terms of assembly, associates with the 50S ribosomal subunit.

In terms of biological role, GTPase that plays an essential role in the late steps of ribosome biogenesis. The protein is GTPase Der of Vibrio atlanticus (strain LGP32) (Vibrio splendidus (strain Mel32)).